A 99-amino-acid polypeptide reads, in one-letter code: A-type ATP synthase subunit F (99 aa).

The protein belongs to the V-ATPase F subunit family. Has multiple subunits with at least A(3), B(3), C, D, E, F, H, I and proteolipid K(x).

Its subcellular location is the cell membrane. Component of the A-type ATP synthase that produces ATP from ADP in the presence of a proton gradient across the membrane. The polypeptide is A-type ATP synthase subunit F (Methanococcoides burtonii (strain DSM 6242 / NBRC 107633 / OCM 468 / ACE-M)).